The sequence spans 129 residues: Small ribosomal subunit protein bS16m (129 aa).

Belongs to the bacterial ribosomal protein bS16 family. As to quaternary structure, component of the mitochondrial ribosome small subunit (28S) which comprises a 12S rRNA and about 30 distinct proteins.

Its subcellular location is the mitochondrion. This Drosophila melanogaster (Fruit fly) protein is Small ribosomal subunit protein bS16m (mRpS16).